The following is a 346-amino-acid chain: uncharacterized protein (346 aa).

Residues 10–109 (WDFIMTDPSS…SNSNGNNSPV (100 aa)) form a disordered region. The span at 26 to 44 (KGSSKNGSPKTSSPKSGSP) shows a compositional bias: low complexity. Polar residues predominate over residues 56-67 (NQQLLQNDSINL). A compositionally biased stretch (low complexity) spans 94 to 109 (KSSVVPSNSNGNNSPV).

This is an uncharacterized protein from Dictyostelium discoideum (Social amoeba).